The chain runs to 67 residues: Large ribosomal subunit protein bL31 (67 aa).

This sequence belongs to the bacterial ribosomal protein bL31 family. Type A subfamily. Part of the 50S ribosomal subunit.

Its function is as follows. Binds the 23S rRNA. The polypeptide is Large ribosomal subunit protein bL31 (Wolinella succinogenes (strain ATCC 29543 / DSM 1740 / CCUG 13145 / JCM 31913 / LMG 7466 / NCTC 11488 / FDC 602W) (Vibrio succinogenes)).